The chain runs to 338 residues: Microtubule-associated protein RP/EB family member 2 (338 aa).

Positions 1–21 (MPGPTQALSPNGENNNDIIQD) are disordered. Residues 57-159 (TMSRHDIIAW…FIQWFKKFFD (103 aa)) enclose the Calponin-homology (CH) domain. Disordered regions lie at residues 171-241 (EARQ…KDLE) and 300-338 (SEEH…FHFV). The span at 200–234 (SPTAGAAKSSPASKPGSTPSRPSSAKKAAPSSSAS) shows a compositional bias: low complexity. The EB1 C-terminal domain maps to 236 to 306 (SDKDLETQVI…LYASEEHESH (71 aa)). Residues 300–327 (SEEHESHTEEHEGEEQVHEQPSSRRSTD) are compositionally biased toward basic and acidic residues. Low complexity predominate over residues 328 to 338 (SRSVSDNFHFV).

The protein belongs to the MAPRE family.

It localises to the cytoplasm. The protein resides in the cytoskeleton. May be involved in microtubule polymerization, and spindle function by stabilizing microtubules and anchoring them at centrosomes. This is Microtubule-associated protein RP/EB family member 2 (MAPRE2) from Gallus gallus (Chicken).